A 1222-amino-acid chain; its full sequence is ATP-dependent helicase/nuclease subunit A (1222 aa).

Positions 39–495 (QKRTAQQIEA…ILLKENFRSQ (457 aa)) constitute a UvrD-like helicase ATP-binding domain. ATP is bound at residue 60-67 (ASAGSGKT). Residues 524–810 (QLIAGSHAQT…NLMTIHKSKG (287 aa)) form the UvrD-like helicase C-terminal domain.

Belongs to the helicase family. AddA subfamily. As to quaternary structure, heterodimer of AddA and AddB/RexB. Requires Mg(2+) as cofactor.

The enzyme catalyses Couples ATP hydrolysis with the unwinding of duplex DNA by translocating in the 3'-5' direction.. The catalysed reaction is ATP + H2O = ADP + phosphate + H(+). Functionally, the heterodimer acts as both an ATP-dependent DNA helicase and an ATP-dependent, dual-direction single-stranded exonuclease. Recognizes the chi site generating a DNA molecule suitable for the initiation of homologous recombination. The AddA nuclease domain is required for chi fragment generation; this subunit has the helicase and 3' -&gt; 5' nuclease activities. The chain is ATP-dependent helicase/nuclease subunit A from Streptococcus pyogenes serotype M28 (strain MGAS6180).